A 462-amino-acid polypeptide reads, in one-letter code: dTDP-4-dehydro-2,6-dideoxy-D-glucose 3-dehydratase (462 aa).

Pyridoxal 5'-phosphate-binding positions include 112-113, Asp-220, and Ser-241; that span reads GS. The active-site Proton donor/acceptor is His-246. Position 314 (Asn-314) interacts with pyridoxal 5'-phosphate.

This sequence belongs to the DegT/DnrJ/EryC1 family. As to quaternary structure, homodimer. Requires pyridoxal 5'-phosphate as cofactor.

It catalyses the reaction dTDP-4-dehydro-2,6-dideoxy-alpha-D-glucose + 2 reduced [2Fe-2S]-[ferredoxin] + 2 H(+) = dTDP-4-dehydro-2,3,6-trideoxy-alpha-D-hexopyranose + 2 oxidized [2Fe-2S]-[ferredoxin] + H2O. Its function is as follows. Involved in the biosynthesis of forosamine ((4-dimethylamino)-2,3,4,6-tetradeoxy-alpha-D-threo-hexopyranose), a highly deoxygenated sugar component of several bioactive natural products such as the insecticidal spinosyns A and D. Catalyzes C-3 deoxygenation of dTDP-4-keto-2,6-dideoxy-alpha-D-glucose to yield dTDP-4-keto-2,3,6-trideoxy-D-glucose via a combined transamination-deoxygenation reaction. The catalysis is initiated by a transamination step in which pyridoxal 5'-phosphate (PLP) is converted to pyridoxamine 5'-phosphate (PMP) in the presence of L-glutamate. This coenzyme then forms a Schiff base with dTDP-4-keto-2,6-dideoxy-alpha-D-glucose and the resulting adduct undergoes a PMP-mediated beta-dehydration reaction to give a sugar enamine intermediate, which after a 2 electrons reduction and hydrolysis yields dTDP-4-keto-2,3,6-trideoxy-D-glucose as a product. Requires cellular reductase (ferredoxin or flavodoxin reductase) rather than a specific partner reductase. L-glutamate is 20-fold more efficient than L-aspartate as an amino donor. In the absence of an electron source and in the presence of L-glutamate, catalyzes a transamination reaction, converting dTDP-4-keto-2,6-dideoxy-alpha-D-glucose to dTDP-4-amino-2,4,6-trideoxy-D-glucose. This Saccharopolyspora spinosa protein is dTDP-4-dehydro-2,6-dideoxy-D-glucose 3-dehydratase.